Reading from the N-terminus, the 518-residue chain is Vesicular inhibitory amino acid transporter (518 aa).

Residues 1-125 lie on the Cytoplasmic side of the membrane; the sequence is MATLIRSKLS…WNVTNAIQGM (125 aa). Residues 126-146 traverse the membrane as a helical segment; it reads FVLGLPYAILHGGYLGLFLII. The Lumenal, vesicle portion of the chain corresponds to 147-197; that stretch reads FAAVVCCYTGKILIACLYEENEDGETVRVRDSYVDIANACCAPRFPKLGGR. The helical transmembrane segment at 198–218 threads the bilayer; the sequence is VVNVAQIIELVMTCILYVVVS. The Cytoplasmic segment spans residues 219–258; sequence GNLMYNSFPNLPISQKSWSIMATAVLLPCAFLKNLKAVSK. Residues 259–279 traverse the membrane as a helical segment; it reads FSLLCTVAHFVINILVIAYCL. Residues 280–298 are Lumenal, vesicle-facing; sequence SRARDWAWDKVKFYIDVKK. A helical membrane pass occupies residues 299 to 319; that stretch reads FPISIGIIVFSYTSQIFLPSL. Over 320-334 the chain is Cytoplasmic; that stretch reads EGNMQSPREFHCMMN. A helical membrane pass occupies residues 335-355; the sequence is WTHIAACILKGLFALVAYLTW. Topologically, residues 356 to 376 are lumenal, vesicle; it reads ADETKEVITDNLPSTIRAVVN. A helical membrane pass occupies residues 377 to 397; it reads LFLVSKALLSYPLPFFAAVEV. Over 398-431 the chain is Cytoplasmic; it reads LEKSLFQEGARAFFPNCYGGDGRLKSWGLTLRCA. A helical membrane pass occupies residues 432–452; sequence LVVFTLLMAIYVPHFALLMGL. At 453 to 454 the chain is on the lumenal, vesicle side; it reads TG. The helical transmembrane segment at 455 to 475 threads the bilayer; that stretch reads SLTGAGLCFLLPSLFHLKLMW. At 476-482 the chain is on the cytoplasmic side; sequence RQLLWHQ. Residues 483 to 503 traverse the membrane as a helical segment; it reads VFFDVSIFVIGSICSVSGFVH. Over 504 to 518 the chain is Lumenal, vesicle; sequence SLEGLIEAYAYNIED.

This sequence belongs to the amino acid/polyamine transporter 2 family. As to expression, initially expressed in late neurula stages in the anterior spinal cord. By early tailbud stages, expression extends posteriorly along the entire developing spinal cord and appears in the hindbrain. In late tailbud embryos, expressed in the forebrain, midbrain, hindbrain, spinal cord and retina. In swimming tadpoles, expressed in an extended and more intense pattern including interneurons.

It localises to the cytoplasmic vesicle membrane. It is found in the presynapse. The catalysed reaction is 4-aminobutanoate(out) + n H(+)(in) = 4-aminobutanoate(in) + n H(+)(out). It carries out the reaction glycine(out) + n H(+)(in) = glycine(in) + n H(+)(out). The enzyme catalyses beta-alanine(out) + n H(+)(in) = beta-alanine(in) + n H(+)(out). Its function is as follows. Antiporter that exchanges vesicular protons for cytosolic 4-aminobutanoate or to a lesser extend glycine, thus allowing their secretion from nerve terminals. The transport is equally dependent on the chemical and electrical components of the proton gradient. May also transport beta-alanine. Acidification of GABAergic synaptic vesicles is a prerequisite for 4-aminobutanoate uptake. The sequence is that of Vesicular inhibitory amino acid transporter from Xenopus laevis (African clawed frog).